Here is a 669-residue protein sequence, read N- to C-terminus: PDF receptor (669 aa).

Residues 1–244 (MTLLSNILDC…DIARRTRTLE (244 aa)) lie on the Extracellular side of the membrane. Positions 24 to 52 (RQSGSSGPSPSAPTAGTFESKSMLEPTSS) are disordered. Positions 26–40 (SGSSGPSPSAPTAGT) are enriched in low complexity. Asn111, Asn117, Asn130, Asn137, Asn148, and Asn198 each carry an N-linked (GlcNAc...) asparagine glycan. A helical membrane pass occupies residues 245-265 (IVGLCLSLFALIVSLLIFCTF). The Cytoplasmic portion of the chain corresponds to 266-274 (RSLRNNRTK). The chain crosses the membrane as a helical span at residues 275–295 (IHKNLFVAMVLQVIIRLTLYL). Topologically, residues 296-334 (DQFRRGNKEAATNTSLSVIENTPYLCEASYVLLEYARTA) are extracellular. An N-linked (GlcNAc...) asparagine glycan is attached at Asn308. The chain crosses the membrane as a helical span at residues 335–355 (MFMWMFIEGLYLHNMVTVAVF). The Cytoplasmic segment spans residues 356 to 366 (QGSFPLKFFSR). Residues 367–387 (LGWCVPILMTTVWARCTVMYM) form a helical membrane-spanning segment. The Extracellular portion of the chain corresponds to 388-411 (DTSLGECLWNYNLTPYYWILEGPR). Residues 412–432 (LAVILLNFCFLVNIIRVLVMK) form a helical membrane-spanning segment. The Cytoplasmic portion of the chain corresponds to 433 to 449 (LRQSQASDIEQTRKAVR). The chain crosses the membrane as a helical span at residues 450–470 (AAIVLLPLLGITNLLHQLAPL). Residues 471-480 (KTATNFAVWS) lie on the Extracellular side of the membrane. The chain crosses the membrane as a helical span at residues 481–501 (YGTHFLTSFQGFFIALIYCFL). Residues 502–669 (NGEVRAVLLK…ESVVFELSEQ (168 aa)) lie on the Cytoplasmic side of the membrane. Disordered stretches follow at residues 536–573 (AYNT…KPSS) and 590–614 (PRLQ…AEPD). Basic and acidic residues predominate over residues 595–609 (KAREKGKDRVEKTDA).

This sequence belongs to the G-protein coupled receptor 2 family. In terms of tissue distribution, mainly present in clock neurons of the brain. Localizes in all 4 s-LNv neurons, 1 LNd neuron, 7 DN1 neurons, and 1 DN3 neuron. In addition to the clock neurons, it is also present in approximately 13 pairs of neurons along the ventral nerve cord in third instar larvae, which do not overlap with dopaminergic or serotonergic neurons. Not present in DN2 neurons (at protein level).

It is found in the cell membrane. In terms of biological role, receptor for PDF, a neuropeptide controlling circadian behavioral rhythms. Probably regulates circadian behavioral rhythms through coordination of activities of clock neurons. PDF-binding results in the elevation of cAMP synthesis. Plays a role in sleep regulation and regulates the state transition from sleep to wake. The protein is PDF receptor of Drosophila melanogaster (Fruit fly).